The primary structure comprises 404 residues: XK-related protein 8 (404 aa).

Transmembrane regions (helical) follow at residues 14-34, 44-64, 169-189, 209-229, 232-252, 262-282, 293-313, and 324-344; these read FVFS…DVWL, VTWF…VQTF, AVQF…VVDY, LIYF…LALC, VLSG…ALWA, SVAG…FSWF, SAIY…TWWC, and ALAL…FKAL.

It belongs to the XK family.

The protein localises to the cell membrane. It catalyses the reaction a 1,2-diacyl-sn-glycero-3-phospho-L-serine(in) = a 1,2-diacyl-sn-glycero-3-phospho-L-serine(out). Its function is as follows. Phospholipid scramblase that promotes phosphatidylserine exposure on apoptotic cell surface, possibly by mediating phospholipid scrambling. Phosphatidylserine is a specific marker only present at the surface of apoptotic cells and acts as a specific signal for engulfment. The polypeptide is XK-related protein 8 (Gasterosteus aculeatus (Three-spined stickleback)).